The sequence spans 717 residues: Myc proto-oncogene protein (717 aa).

T217 carries the post-translational modification Phosphothreonine. The residue at position 220 (S220) is a Phosphoserine. Disordered regions lie at residues 288–376 (LNQH…KNNS), 462–535 (TPAS…LKDP), and 555–584 (HSSM…SGQD). Residues 298 to 311 (QQQLNQQQLDEQQQ) are compositionally biased toward low complexity. A compositionally biased stretch (polar residues) spans 351-360 (KSGSNASITT). The span at 361 to 376 (NNNNSNNKNNKLKNNS) shows a compositional bias: low complexity. Residues 462–488 (TPASSSPVKSVANSRYPSPSSTPYQNC) show a composition bias toward polar residues. Residues 489 to 523 (SSASPSYSPLSVDSSNVSSSSSSSSSQSSFTTSSS) show a composition bias toward low complexity. The interval 625-638 (EKRNQHNDMERQRR) is basic motif. The bHLH domain maps to 625–677 (EKRNQHNDMERQRRIGLKNLFEALKKQIPTIRDKERAPKVNILREAAKLCIQL). Positions 639-677 (IGLKNLFEALKKQIPTIRDKERAPKVNILREAAKLCIQL) are helix-loop-helix motif.

Belongs to the Myc transcription factor family. Efficient DNA binding requires dimerization with another bHLH protein. Binds DNA as a heterodimer with Max. Interacts with ago. Interacts with lid. Part of a complex containing lid, Myc and ash2. Component of a complex with pont and rept. Interacts with puf. Interacts with wh/wuho; the interaction may be mediated by mei-P26 and may be involved in the regulation of ribosome biogenesis. Probably targeted for ubiquitination by the SFC ubiquitin ligase complex member ago, leading to its proteasomal degradation. As to expression, low levels detected throughout embryo before cellular blastoderm formation, particularly concentrated in pole plasm. Zygotic expression detected during cellular blastoderm stage in endodermal anlagen of anterior and posterior midgut at both poles. After gastrulation, expression detected in invaginating ventral furrow of mesoderm. Continued expression in anterior and posterior midgut and mesoderm during germband extension. During late germ-band retraction, expression remains detectable in fusing midgut and presumed developing somatic musculature.

It localises to the nucleus. The protein localises to the nucleolus. It is found in the cytoplasm. Participates in the regulation of gene transcription. Binds DNA in a non-specific manner, yet also specifically recognizes the core sequence CAC[GA]TG. Seems to activate the transcription of growth-related genes; required for cellular proliferation and growth. Functions in the TORC2-mediated regulation of cell growth, acting downstream of the TORC2 complex. Inhibits the demethylase activity of Lid. Activates transcription of mbm. Has a role in ribosome biogenesis and endoreplication in fat body cells by activating the transcription of LTV1. Able to induce the SCF E3 ubiquitin-protein ligase member archipelago (ago) which functions in its degradation. It may therefore create a negative feedback loop with ago that is regulated by the ubiquitin hydrolase puf. In dopaminergic neurons, regulates dopamine levels by binding to the E-box (E1) of the dopamine decarboxylase Ddc promoter and thereby inhibiting its transcription. This regulation is required to suppress male-male courtship. Involved in the acs and insulin signaling mediated non-cell-autonomous induction of amino acid release into the hemolymph following the cytoplasmic purge response to intestinal bacterial infection; required for efficient recovery of enterocyte thickness. This chain is Myc proto-oncogene protein, found in Drosophila melanogaster (Fruit fly).